The sequence spans 342 residues: Holliday junction branch migration complex subunit RuvB (342 aa).

The segment at 1 to 185 is large ATPase domain (RuvB-L); the sequence is MTVKPLRDVT…FPIQERLEYY (185 aa). Residues Leu-24, Arg-25, Gly-66, Lys-69, Thr-70, Ser-71, 132 to 134, Arg-175, Tyr-185, and Arg-222 contribute to the ATP site; that span reads EDY. Thr-70 is a binding site for Mg(2+). The segment at 186–256 is small ATPAse domain (RuvB-S); it reads GPAELKEIAV…VVDRTLRRLE (71 aa). The head domain (RuvB-H) stretch occupies residues 259–342; that stretch reads ARGLDAMDRR…RPGGKQGSLV (84 aa). DNA-binding residues include Arg-314 and Arg-319.

It belongs to the RuvB family. In terms of assembly, homohexamer. Forms an RuvA(8)-RuvB(12)-Holliday junction (HJ) complex. HJ DNA is sandwiched between 2 RuvA tetramers; dsDNA enters through RuvA and exits via RuvB. An RuvB hexamer assembles on each DNA strand where it exits the tetramer. Each RuvB hexamer is contacted by two RuvA subunits (via domain III) on 2 adjacent RuvB subunits; this complex drives branch migration. In the full resolvosome a probable DNA-RuvA(4)-RuvB(12)-RuvC(2) complex forms which resolves the HJ.

Its subcellular location is the cytoplasm. The catalysed reaction is ATP + H2O = ADP + phosphate + H(+). The RuvA-RuvB-RuvC complex processes Holliday junction (HJ) DNA during genetic recombination and DNA repair, while the RuvA-RuvB complex plays an important role in the rescue of blocked DNA replication forks via replication fork reversal (RFR). RuvA specifically binds to HJ cruciform DNA, conferring on it an open structure. The RuvB hexamer acts as an ATP-dependent pump, pulling dsDNA into and through the RuvAB complex. RuvB forms 2 homohexamers on either side of HJ DNA bound by 1 or 2 RuvA tetramers; 4 subunits per hexamer contact DNA at a time. Coordinated motions by a converter formed by DNA-disengaged RuvB subunits stimulates ATP hydrolysis and nucleotide exchange. Immobilization of the converter enables RuvB to convert the ATP-contained energy into a lever motion, pulling 2 nucleotides of DNA out of the RuvA tetramer per ATP hydrolyzed, thus driving DNA branch migration. The RuvB motors rotate together with the DNA substrate, which together with the progressing nucleotide cycle form the mechanistic basis for DNA recombination by continuous HJ branch migration. Branch migration allows RuvC to scan DNA until it finds its consensus sequence, where it cleaves and resolves cruciform DNA. The polypeptide is Holliday junction branch migration complex subunit RuvB (Anaeromyxobacter sp. (strain K)).